The chain runs to 200 residues: 3-isopropylmalate dehydratase small subunit (200 aa).

It belongs to the LeuD family. LeuD type 1 subfamily. As to quaternary structure, heterodimer of LeuC and LeuD.

The catalysed reaction is (2R,3S)-3-isopropylmalate = (2S)-2-isopropylmalate. The protein operates within amino-acid biosynthesis; L-leucine biosynthesis; L-leucine from 3-methyl-2-oxobutanoate: step 2/4. Catalyzes the isomerization between 2-isopropylmalate and 3-isopropylmalate, via the formation of 2-isopropylmaleate. The polypeptide is 3-isopropylmalate dehydratase small subunit (Campylobacter jejuni subsp. doylei (strain ATCC BAA-1458 / RM4099 / 269.97)).